Reading from the N-terminus, the 192-residue chain is MTEKQNLFGPVVRLTGVLVVLCGLIYPAMVTGIAQGVMKDHADGSLIYEKGEIIGSKRIGQEFTSAKYFHGRISSIAYKAEGSGSNNYAPSNPELRQRTEESIEKWKEDNPSVPVREVPIDLVTNSGSGLDPDISPKAAYAQVDRVAKETKISKEELKAIIASHIEGRAFGLYGEERVNVLQLNMEVKKRIQ.

A helical transmembrane segment spans residues 14 to 34 (LTGVLVVLCGLIYPAMVTGIA).

This sequence belongs to the KdpC family. The system is composed of three essential subunits: KdpA, KdpB and KdpC.

The protein localises to the cell membrane. Functionally, part of the high-affinity ATP-driven potassium transport (or Kdp) system, which catalyzes the hydrolysis of ATP coupled with the electrogenic transport of potassium into the cytoplasm. This subunit acts as a catalytic chaperone that increases the ATP-binding affinity of the ATP-hydrolyzing subunit KdpB by the formation of a transient KdpB/KdpC/ATP ternary complex. The protein is Potassium-transporting ATPase KdpC subunit of Bacillus cytotoxicus (strain DSM 22905 / CIP 110041 / 391-98 / NVH 391-98).